Reading from the N-terminus, the 463-residue chain is Putative protein FAM90A2P (463 aa).

4 disordered regions span residues 1–42 (MTAR…DPRL), 67–115 (ALVP…PQRK), 150–295 (MPVH…PAQA), and 326–365 (ALENLQPPPAATELGPSTSPQMGRRTPAQVPGVDRQPPHS). Basic and acidic residues-rich tracts occupy residues 74 to 83 (GKKEGKENLK), 97 to 114 (NKDKGEKEERPRQQDPQR), and 159 to 170 (PCVDPELADRSA). A compositionally biased stretch (low complexity) spans 180-198 (LASLSPLRKASLRSSSSLG).

This sequence belongs to the FAM90 family.

The polypeptide is Putative protein FAM90A2P (FAM90A2P) (Homo sapiens (Human)).